A 464-amino-acid polypeptide reads, in one-letter code: 3-isopropylmalate dehydratase large subunit (464 aa).

[4Fe-4S] cluster contacts are provided by cysteine 337, cysteine 397, and cysteine 400.

It belongs to the aconitase/IPM isomerase family. LeuC type 1 subfamily. In terms of assembly, heterodimer of LeuC and LeuD. The cofactor is [4Fe-4S] cluster.

The catalysed reaction is (2R,3S)-3-isopropylmalate = (2S)-2-isopropylmalate. It participates in amino-acid biosynthesis; L-leucine biosynthesis; L-leucine from 3-methyl-2-oxobutanoate: step 2/4. Its function is as follows. Catalyzes the isomerization between 2-isopropylmalate and 3-isopropylmalate, via the formation of 2-isopropylmaleate. This is 3-isopropylmalate dehydratase large subunit from Bacillus cereus (strain G9842).